We begin with the raw amino-acid sequence, 85 residues long: Small ribosomal subunit protein bS16 (85 aa).

The protein belongs to the bacterial ribosomal protein bS16 family.

The chain is Small ribosomal subunit protein bS16 from Nitrosomonas eutropha (strain DSM 101675 / C91 / Nm57).